Here is a 348-residue protein sequence, read N- to C-terminus: Putative serine/threonine-protein phosphatase C26H8.05c (348 aa).

Positions 53, 55, 81, and 113 each coordinate Mn(2+). The Proton donor role is filled by H114. Mn(2+) is bound by residues H163 and H237. The disordered stretch occupies residues 259-282 (TNEEDSELDSDSASPVDDSPAPGD). The segment covering 269 to 280 (DSASPVDDSPAP) has biased composition (low complexity). Residue S272 is modified to Phosphoserine. The residue at position 348 (L348) is a Leucine methyl ester.

The protein belongs to the PPP phosphatase family. PP-1 subfamily. It depends on Mn(2+) as a cofactor.

It localises to the cytoplasm. The protein localises to the nucleus. The catalysed reaction is O-phospho-L-seryl-[protein] + H2O = L-seryl-[protein] + phosphate. It carries out the reaction O-phospho-L-threonyl-[protein] + H2O = L-threonyl-[protein] + phosphate. The chain is Putative serine/threonine-protein phosphatase C26H8.05c from Schizosaccharomyces pombe (strain 972 / ATCC 24843) (Fission yeast).